A 511-amino-acid polypeptide reads, in one-letter code: 2,3-bisphosphoglycerate-independent phosphoglycerate mutase (511 aa).

Asp-12 is a binding site for Mn(2+). Tyr-36 carries the post-translational modification Phosphotyrosine. Residue Ser-62 coordinates Mn(2+). Residue Ser-62 is the Phosphoserine intermediate of the active site. Substrate-binding positions include His-123, 153 to 154 (RD), Arg-185, Arg-191, 261 to 264 (RPDR), and Lys-336. Mn(2+)-binding residues include Asp-403, His-407, Asp-444, His-445, and His-462.

It belongs to the BPG-independent phosphoglycerate mutase family. As to quaternary structure, monomer. Requires Mn(2+) as cofactor.

It catalyses the reaction (2R)-2-phosphoglycerate = (2R)-3-phosphoglycerate. It functions in the pathway carbohydrate degradation; glycolysis; pyruvate from D-glyceraldehyde 3-phosphate: step 3/5. Functionally, essential for rapid growth and for sporulation. Catalyzes the interconversion of 2-phosphoglycerate and 3-phosphoglycerate. This Bacillus pumilus (strain SAFR-032) protein is 2,3-bisphosphoglycerate-independent phosphoglycerate mutase.